The chain runs to 108 residues: Ig kappa chain V region 120 (108 aa).

The segment at 1–23 is framework-1; it reads AFELTQTPSSVEAAVGGTVTIKC. Residues 24 to 34 form a complementarity-determining-1 region; it reads QSSQSIGTYLA. A framework-2 region spans residues 35–49; sequence WYZZKPGQPPKLLIY. Positions 50-56 are complementarity-determining-2; sequence RASTLAS. The segment at 57–88 is framework-3; that stretch reads GVSSRFKGSGSGTEFTLTISGVECADAATYYC. The complementarity-determining-3 stretch occupies residues 89 to 97; that stretch reads QGTYYZSAS. Residues 98–107 form a framework-4 region; that stretch reads FGGGTEVVVK.

This chain is Ig kappa chain V region 120, found in Oryctolagus cuniculus (Rabbit).